A 92-amino-acid chain; its full sequence is UPF0250 protein XAC0666 (92 aa).

The protein belongs to the UPF0250 family.

The polypeptide is UPF0250 protein XAC0666 (Xanthomonas axonopodis pv. citri (strain 306)).